The sequence spans 489 residues: Dihydropyrimidinase 1 (489 aa).

Zn(2+) contacts are provided by His61, His63, and Lys156. At Lys156 the chain carries N6-carboxylysine. Tyr161 contributes to the substrate binding site. Zn(2+)-binding residues include His189 and His245. Residue Ser295 coordinates substrate. Residue Asp323 participates in Zn(2+) binding. Asn344 is a binding site for substrate.

This sequence belongs to the metallo-dependent hydrolases superfamily. Hydantoinase/dihydropyrimidinase family. In terms of assembly, homotetramer. Zn(2+) serves as cofactor. Carboxylation allows a single lysine to coordinate two zinc ions. In L1-L2 larvae, expressed in body hypodermal cells, hemidesmosomes and in a neuronal cell between the pharynx and ring neuropil. In adults, expression is seen in body hypodermal cells and pharynx.

It localises to the nucleus. It catalyses the reaction 5,6-dihydrouracil + H2O = 3-(carbamoylamino)propanoate + H(+). The chain is Dihydropyrimidinase 1 (dhp-1) from Caenorhabditis elegans.